The sequence spans 143 residues: Small ribosomal subunit protein bS6 (143 aa).

The disordered stretch occupies residues 98-143; it reads TEQSLIMKSKDEKGDKPERSERRRRDDEEGEAPAANDNDGDNAEAA. Residues 105–124 are compositionally biased toward basic and acidic residues; that stretch reads KSKDEKGDKPERSERRRRDD.

The protein belongs to the bacterial ribosomal protein bS6 family.

Binds together with bS18 to 16S ribosomal RNA. This is Small ribosomal subunit protein bS6 from Xanthomonas euvesicatoria pv. vesicatoria (strain 85-10) (Xanthomonas campestris pv. vesicatoria).